A 245-amino-acid polypeptide reads, in one-letter code: Probable transcriptional regulatory protein Aflv_0709 (245 aa).

The segment covering 1-14 (MAGHSKWKNIQRRK) has biased composition (basic residues). Residues 1–21 (MAGHSKWKNIQRRKNAQDAKR) form a disordered region.

This sequence belongs to the TACO1 family.

It is found in the cytoplasm. This Anoxybacillus flavithermus (strain DSM 21510 / WK1) protein is Probable transcriptional regulatory protein Aflv_0709.